A 1012-amino-acid chain; its full sequence is Antigenic heat-stable 120 kDa protein (1012 aa).

Disordered regions lie at residues 1 to 73 and 348 to 396; these read DTSE…TSDP and GQSK…PQSQ. The span at 12–27 shows a compositional bias: basic and acidic residues; the sequence is EYTEEQKQTLEQEQKE. Residues 47 to 61 show a composition bias toward low complexity; sequence SASSAQSTPSMSALS. Composition is skewed to polar residues over residues 62–73, 348–373, and 380–396; these read GNISPDSQTSDP, GQSKEQPLITPQQTTSSSVEPPQYKQ, and PTNQPLQAETSQMPQSQ.

It is found in the cytoplasm. This is Antigenic heat-stable 120 kDa protein (sca4) from Rickettsia slovaca.